Consider the following 171-residue polypeptide: MVSSNTDLTYSSAIEGGIVVSKADAVINWIRTNSMWPMPMGLACCAIELMQVGNGRFDIARFGAEVMRFSPRQSDCMIVAGSVTYKMAPQIRRIYDQMMSPKWVIAMGACASSGGMYRSYAHMQGVDRILPVDVYISGCPPRPEGILDALMKLQAKIRTERAGQNLFKATV.

[4Fe-4S] cluster is bound by residues Cys44, Cys45, Cys110, and Cys139.

Belongs to the complex I 20 kDa subunit family. NDH-1 is composed of 14 different subunits. Subunits NuoB, C, D, E, F, and G constitute the peripheral sector of the complex. The cofactor is [4Fe-4S] cluster.

It is found in the cell inner membrane. It catalyses the reaction a quinone + NADH + 5 H(+)(in) = a quinol + NAD(+) + 4 H(+)(out). Functionally, NDH-1 shuttles electrons from NADH, via FMN and iron-sulfur (Fe-S) centers, to quinones in the respiratory chain. The immediate electron acceptor for the enzyme in this species is believed to be ubiquinone. Couples the redox reaction to proton translocation (for every two electrons transferred, four hydrogen ions are translocated across the cytoplasmic membrane), and thus conserves the redox energy in a proton gradient. In Opitutus terrae (strain DSM 11246 / JCM 15787 / PB90-1), this protein is NADH-quinone oxidoreductase subunit B 1.